The following is a 288-amino-acid chain: ATP synthase gamma chain (288 aa).

Belongs to the ATPase gamma chain family. As to quaternary structure, F-type ATPases have 2 components, CF(1) - the catalytic core - and CF(0) - the membrane proton channel. CF(1) has five subunits: alpha(3), beta(3), gamma(1), delta(1), epsilon(1). CF(0) has three main subunits: a, b and c.

The protein resides in the cell membrane. Functionally, produces ATP from ADP in the presence of a proton gradient across the membrane. The gamma chain is believed to be important in regulating ATPase activity and the flow of protons through the CF(0) complex. The chain is ATP synthase gamma chain from Staphylococcus aureus (strain bovine RF122 / ET3-1).